The primary structure comprises 296 residues: Nucleotide-binding protein MGAS2096_Spy0550 (296 aa).

An ATP-binding site is contributed by Gly13–Thr20. Asp63–Ser66 lines the GTP pocket.

It belongs to the RapZ-like family.

Displays ATPase and GTPase activities. This chain is Nucleotide-binding protein MGAS2096_Spy0550, found in Streptococcus pyogenes serotype M12 (strain MGAS2096).